The primary structure comprises 194 residues: UPF0301 protein CBU_2093 (194 aa).

Belongs to the UPF0301 (AlgH) family.

The chain is UPF0301 protein CBU_2093 from Coxiella burnetii (strain RSA 493 / Nine Mile phase I).